Consider the following 793-residue polypeptide: RNA-binding protein spenito (793 aa).

Disordered stretches follow at residues 1–93 (MSSH…PPAE) and 243–296 (HHDY…KKDK). Over residues 25–42 (SRSPGPASRSSLSRNSRS) the composition is skewed to low complexity. The span at 257–268 (RGGHPHHLHGHA) shows a compositional bias: basic residues. Residues 285–296 (APYEKPESKKDK) show a composition bias toward basic and acidic residues. RRM domains lie at 314 to 391 (RTLF…YGKV) and 395 to 469 (TRMW…FAEL). Residues 507–623 (YAPRGGYSPY…RNDALASAST (117 aa)) form a disordered region. Residues 526–536 (GGYRGRGRGMY) show a composition bias toward basic residues. Residues 566-593 (DEWRRPPGESYDRGARSSSREPGVERSR) are compositionally biased toward basic and acidic residues. The SPOC domain maps to 624–791 (VPDVARKCST…HLVIVVVRGG (168 aa)).

This sequence belongs to the RRM Spen family. Component of the WMM complex, a N6-methyltransferase complex composed of a catalytic subcomplex, named MAC, and of an associated subcomplex, named MACOM. The MAC subcomplex is composed of Ime4/Mettl3 and Mettl14. The MACOM subcomplex is composed of fl(2)d, Flacc/Xio, Hakai, vir, and, in some cases of nito. Interacts with Sxl. Interacts with Hipk; leading to phosphorylation. In terms of processing, phosphorylated by Hipk at Ser-23, Ser-25 and/or Ser-27; the precise position if phosphorylation sites is unknown. In terms of tissue distribution, widely expressed. Shows some enrichment in the central nervous system.

The protein resides in the nucleus. Functionally, RNA-binding protein that acts as an associated component of the WMM complex, a complex that mediates N6-methyladenosine (m6A) methylation of mRNAs. M6a modification plays a role in the efficiency of mRNA splicing and is required for sex determination. In the WMM complex, may act by binding target RNAs and recruiting the WMM complex. Required for sex determination and dosage compensation via Sxl alternative splicing: m6A methylation acts as a key regulator of Sxl pre-mRNA and promotes female-specific alternative splicing of Sxl, which determines female physiognomy. M6A methylation is also required for neuronal functions. Acts as a positive regulator of canonical Wg signaling during wing disk and eye development. The chain is RNA-binding protein spenito from Drosophila melanogaster (Fruit fly).